Here is a 104-residue protein sequence, read N- to C-terminus: Protein E7 (104 aa).

The E7 terminal domain stretch occupies residues 1 to 49 (MRGNAPTLKDIILYDLPTCDPTTCDTPPVDLYCYEQFDTSDEDDEDDDQ). The short motif at 31-35 (LYCYE) is the LXCXE motif; interaction with host RB1 and TMEM173/STING element. A zinc finger spans residues 64-100 (CTQCGRSVKLVVSSTGADIQQLHQMLLDTLGIVCPLC). The Nuclear export signal motif lies at 82–90 (IQQLHQMLL).

This sequence belongs to the papillomaviridae E7 protein family. Homodimer. Homooligomer. Interacts with host RB1; this interaction induces dissociation of RB1-E2F1 complex thereby disrupting RB1 activity. Interacts with host EP300; this interaction represses EP300 transcriptional activity. Interacts with protein E2; this interaction inhibits E7 oncogenic activity. Interacts with host TMEM173/STING; this interaction impairs the ability of TMEM173/STING to sense cytosolic DNA and promote the production of type I interferon (IFN-alpha and IFN-beta). In terms of processing, highly phosphorylated.

It localises to the host cytoplasm. It is found in the host nucleus. Its function is as follows. Plays a role in viral genome replication by driving entry of quiescent cells into the cell cycle. Stimulation of progression from G1 to S phase allows the virus to efficiently use the cellular DNA replicating machinery to achieve viral genome replication. E7 protein has both transforming and trans-activating activities. Induces the disassembly of the E2F1 transcription factor from RB1, with subsequent transcriptional activation of E2F1-regulated S-phase genes. Interferes with host histone deacetylation mediated by HDAC1 and HDAC2, leading to transcription activation. Also plays a role in the inhibition of both antiviral and antiproliferative functions of host interferon alpha. Interaction with host TMEM173/STING impairs the ability of TMEM173/STING to sense cytosolic DNA and promote the production of type I interferon (IFN-alpha and IFN-beta). This is Protein E7 from Homo sapiens (Human).